The sequence spans 296 residues: Light-independent protochlorophyllide reductase iron-sulfur ATP-binding protein (296 aa).

Basic and acidic residues predominate over residues 1–11 (MTSTITRKEDG). Residues 1-20 (MTSTITRKEDGEGSVQVKQD) form a disordered region. ATP contacts are provided by residues 39 to 44 (GIGKST) and Lys-68. Ser-43 lines the Mg(2+) pocket. Positions 124 and 158 each coordinate [4Fe-4S] cluster. 209-210 (NR) contacts ATP.

Belongs to the NifH/BchL/ChlL family. In terms of assembly, homodimer. Protochlorophyllide reductase is composed of three subunits; ChlL, ChlN and ChlB. It depends on [4Fe-4S] cluster as a cofactor.

It catalyses the reaction chlorophyllide a + oxidized 2[4Fe-4S]-[ferredoxin] + 2 ADP + 2 phosphate = protochlorophyllide a + reduced 2[4Fe-4S]-[ferredoxin] + 2 ATP + 2 H2O. The protein operates within porphyrin-containing compound metabolism; chlorophyll biosynthesis (light-independent). Functionally, component of the dark-operative protochlorophyllide reductase (DPOR) that uses Mg-ATP and reduced ferredoxin to reduce ring D of protochlorophyllide (Pchlide) to form chlorophyllide a (Chlide). This reaction is light-independent. The L component serves as a unique electron donor to the NB-component of the complex, and binds Mg-ATP. This Prochlorococcus marinus (strain NATL1A) protein is Light-independent protochlorophyllide reductase iron-sulfur ATP-binding protein.